We begin with the raw amino-acid sequence, 295 residues long: Protease HtpX (295 aa).

2 helical membrane passes run 4–24 (IFLFLATNLAIIVVLSIVLRL) and 42–62 (ALLIFAAVFGFGGSFISLAIS). Histidine 147 is a binding site for Zn(2+). The active site involves glutamate 148. Histidine 151 is a binding site for Zn(2+). The next 2 helical transmembrane spans lie at 155-175 (GDMVTLALIQGVVNTFVIFLA) and 197-217 (FWITTIVAEIVFAILASIIVM). Glutamate 224 contributes to the Zn(2+) binding site.

This sequence belongs to the peptidase M48B family. Zn(2+) serves as cofactor.

The protein resides in the cell inner membrane. This is Protease HtpX from Thioalkalivibrio sulfidiphilus (strain HL-EbGR7).